The sequence spans 863 residues: Alanine--tRNA ligase (863 aa).

The Zn(2+) site is built by His-552, His-556, Cys-654, and His-658.

Belongs to the class-II aminoacyl-tRNA synthetase family. Zn(2+) serves as cofactor.

It localises to the cytoplasm. It carries out the reaction tRNA(Ala) + L-alanine + ATP = L-alanyl-tRNA(Ala) + AMP + diphosphate. Functionally, catalyzes the attachment of alanine to tRNA(Ala) in a two-step reaction: alanine is first activated by ATP to form Ala-AMP and then transferred to the acceptor end of tRNA(Ala). Also edits incorrectly charged Ser-tRNA(Ala) and Gly-tRNA(Ala) via its editing domain. The chain is Alanine--tRNA ligase from Nitrosomonas europaea (strain ATCC 19718 / CIP 103999 / KCTC 2705 / NBRC 14298).